The primary structure comprises 1378 residues: Disease resistance protein RRS1 (1378 aa).

In terms of domain architecture, TIR spans 5 to 146; the sequence is EKDEEFVCIS…EIVRDVYETH (142 aa). Residues 170–421 form the NB-ARC domain; it reads IGIRCVGIWG…LLEGCGFFPH (252 aa). 179 to 186 contributes to the ATP binding site; sequence GMPGIGKT. 9 LRR repeats span residues 498–522, 535–553, 554–575, 577–598, 621–646, 665–688, 742–766, 768–793, and 831–854; these read SEEIEGLFLDTSNLRFDLQPSAFKN, NPEVHPVINFPTGSLHSLP, NELRLLHWENYPLKSLPQNFDP, HLVEINMPYSQLQKLWGGTKNL, AENLEVIDLQGCTRLQNFPAAGRLLR, PPNIEKLHLQGTGILALPVSTVKP, LPNMANLDLNVLDLSGCSSLNSIQG, PRFLKQLYLGGTAIREVPQLPQSLEI, and PRNLKELYFAGTTLREVPQLPLSL. The short motif at 988-1005 is the Nuclear localization signal element; the sequence is RNFHCWAPGKVVPKVRKD. The WRKY DNA-binding region spans 1204 to 1272; sequence IPAIDEGDLW…YLSEHNHPRP (69 aa). The segment at 1300 to 1321 is disordered; the sequence is RVFQNKDEPNQPHLPSSSTPPR.

In terms of assembly, interacts with PopP2, a R.solanacearum type III effector.

The protein localises to the nucleus. It localises to the cytoplasm. Its function is as follows. Transcription factor. Interacts specifically with the W box (5'-(T)TGAC[CT]-3'), a frequently occurring elicitor-responsive cis-acting element. Also acts as a disease resistance protein involved in resistance to fungal and bacterial pathogens, including R.solanacearum, P.syringae pv. tomato and C.higginsianum. RRS1 mediated resistance depends on salicylic acid and NDR1 (AC O48915). In Arabidopsis thaliana (Mouse-ear cress), this protein is Disease resistance protein RRS1.